We begin with the raw amino-acid sequence, 148 residues long: Transcriptional repressor NrdR (148 aa).

A zinc finger lies at 3-32 (CPKCSSEESKVVDSRQAEDAIRRRRVCESC). The region spanning 47–137 (LLVIKKDDKR…VYRSFKDVSE (91 aa)) is the ATP-cone domain.

It belongs to the NrdR family. The cofactor is Zn(2+).

Its function is as follows. Negatively regulates transcription of bacterial ribonucleotide reductase nrd genes and operons by binding to NrdR-boxes. The sequence is that of Transcriptional repressor NrdR from Lactococcus lactis subsp. lactis (strain IL1403) (Streptococcus lactis).